Consider the following 424-residue polypeptide: Folate-like transporter 2 (424 aa).

The N-linked (GlcNAc...) asparagine glycan is linked to N35. Helical transmembrane passes span 48–68, 71–91, 99–119, 136–156, 164–184, and 233–253; these read IWTYSYLITLIPAFLLTDVFL, PLLVFEAFSYFLCWVIFVFGK, LEVFYGWATATEIAYFAYIYV, ALLVGRFLAYALAQLLIGLNW, IISLVAMTIAVFLALILPGVE, and PLILKWSVWSALSSCIFYQVT. A glycan (N-linked (GlcNAc...) asparagine) is linked at N254. 4 helical membrane-spanning segments follow: residues 299–319, 324–344, 361–381, and 392–412; these read WGDLLLAVGSIGQAGLLFWMS, IVVLYLSYIFYRVIYQLTTTI, LFGINTFVALLLQSILTAVVI, and FVVYSCYHLVVAFGFAIIFGI.

Belongs to the reduced folate carrier (RFC) transporter (TC 2.A.48) family.

It localises to the membrane. Unlike folt-1, does not appear to act as a folate transporter. This chain is Folate-like transporter 2 (folt-2), found in Caenorhabditis elegans.